We begin with the raw amino-acid sequence, 299 residues long: Hemolysin C homolog (299 aa).

CBS domains lie at 80-142 and 145-202; these read MVPR…NGRL and LIRK…IDDE.

The protein belongs to the UPF0053 family. Hemolysin C subfamily.

This chain is Hemolysin C homolog (tlyC), found in Rickettsia massiliae (strain Mtu5).